A 174-amino-acid chain; its full sequence is Peptide deformylase (174 aa).

Cys-94 and His-136 together coordinate Fe cation. Residue Glu-137 is part of the active site. His-140 contributes to the Fe cation binding site.

Belongs to the polypeptide deformylase family. The cofactor is Fe(2+).

The enzyme catalyses N-terminal N-formyl-L-methionyl-[peptide] + H2O = N-terminal L-methionyl-[peptide] + formate. Removes the formyl group from the N-terminal Met of newly synthesized proteins. Requires at least a dipeptide for an efficient rate of reaction. N-terminal L-methionine is a prerequisite for activity but the enzyme has broad specificity at other positions. The polypeptide is Peptide deformylase (Maricaulis maris (strain MCS10) (Caulobacter maris)).